The following is an 80-amino-acid chain: Protein UL148B (80 aa).

The chain crosses the membrane as a helical span at residues 10 to 30 (AICVGLVMGVTVIASCALLVF).

It is found in the host membrane. The sequence is that of Protein UL148B (UL148B) from Homo sapiens (Human).